We begin with the raw amino-acid sequence, 598 residues long: NADH-ubiquinone oxidoreductase chain 5 (598 aa).

14 helical membrane-spanning segments follow: residues 6–26, 32–52, 84–100, 113–133, 136–156, 241–261, 272–292, 301–320, 325–347, 370–390, 409–429, 456–476, 478–498, and 576–596; these read LTLI…PPII, MILT…PLTI, YTVI…WSIM, MDKF…FISA, LLQL…LISW, TPVS…FLLI, LMLE…ALCA, IIAF…VGLN, AFLH…GSII, TTCM…AGFF, LMVT…LIIM, LAWG…PMKP, IFTM…ISLI, and LNSA…LSLT.

It belongs to the complex I subunit 5 family.

It is found in the mitochondrion inner membrane. The catalysed reaction is a ubiquinone + NADH + 5 H(+)(in) = a ubiquinol + NAD(+) + 4 H(+)(out). Its function is as follows. Core subunit of the mitochondrial membrane respiratory chain NADH dehydrogenase (Complex I) that is believed to belong to the minimal assembly required for catalysis. Complex I functions in the transfer of electrons from NADH to the respiratory chain. The immediate electron acceptor for the enzyme is believed to be ubiquinone. The chain is NADH-ubiquinone oxidoreductase chain 5 (MT-ND5) from Petromyzon marinus (Sea lamprey).